A 959-amino-acid polypeptide reads, in one-letter code: Transcription factor 1 (959 aa).

2 C2H2-type zinc fingers span residues 2–24 and 30–52; these read VFCT…ILTH and FKCF…YTVH. A DNA-binding region (zn(2)-C6 fungal-type) is located at residues 79 to 105; it reads CSNCAKTKTKCDKKFPCSRCASRNLRC. Residues 154–226 form a disordered region; that stretch reads PTGHVEESSK…SFPGFDDYNQ (73 aa). A compositionally biased stretch (low complexity) spans 163–178; sequence KSSSPSGSPTSISHNS.

It localises to the nucleus. Elsinochromes biosynthesis cluster-specific transcription factor that positively regulates the expression of cluster genes including RDT1, PKS1, PRF1 and HP1, and subsequent elsinochromes production. In Elsinoe fawcettii (Citrus scab fungus), this protein is Transcription factor 1.